A 148-amino-acid chain; its full sequence is Probable glycine cleavage system H protein 2 (148 aa).

A Lipoyl-binding domain is found at 32–114; that stretch reads TIVVGITDLA…YGKGWLVKMK (83 aa). Residue Lys-73 is modified to N6-lipoyllysine.

Belongs to the GcvH family. In terms of assembly, the glycine cleavage system is composed of four proteins: P, T, L and H. Requires (R)-lipoate as cofactor.

In terms of biological role, the glycine cleavage system catalyzes the degradation of glycine. The H protein shuttles the methylamine group of glycine from the P protein to the T protein. The sequence is that of Probable glycine cleavage system H protein 2 from Saccharolobus solfataricus (strain ATCC 35092 / DSM 1617 / JCM 11322 / P2) (Sulfolobus solfataricus).